The chain runs to 220 residues: Ribose-5-phosphate isomerase A (220 aa).

Residues 25-28 (TGST), 80-83 (DGAD), and 93-96 (KGGG) each bind substrate. The Proton acceptor role is filled by Glu-102. Lys-120 contacts substrate.

It belongs to the ribose 5-phosphate isomerase family. Homodimer.

The enzyme catalyses aldehydo-D-ribose 5-phosphate = D-ribulose 5-phosphate. The protein operates within carbohydrate degradation; pentose phosphate pathway; D-ribose 5-phosphate from D-ribulose 5-phosphate (non-oxidative stage): step 1/1. Catalyzes the reversible conversion of ribose-5-phosphate to ribulose 5-phosphate. The polypeptide is Ribose-5-phosphate isomerase A (Bacillus cereus (strain ZK / E33L)).